A 350-amino-acid polypeptide reads, in one-letter code: Sterol-4-alpha-carboxylate 3-dehydrogenase ERG26, decarboxylating (350 aa).

NADP(+)-binding positions include Gly-12–Gly-18, Asp-63–Leu-64, and Ser-85–Ser-87. Ser-125 and Tyr-152 together coordinate substrate. NADP(+) contacts are provided by residues Tyr-152, Lys-156, and Pro-179 to Ile-182. Lys-156 (proton donor) is an active-site residue.

The protein belongs to the 3-beta-HSD family. In terms of assembly, heterotetramer of ERG25, ERG26, ERG27 and ERG28. ERG28 acts as a scaffold to tether ERG27 and other 4,4-demethylation-related enzymes, forming a demethylation enzyme complex, in the endoplasmic reticulum.

It localises to the endoplasmic reticulum membrane. The catalysed reaction is 4beta-methylzymosterol-4alpha-carboxylate + NADP(+) = 3-dehydro-4-methylzymosterol + CO2 + NADPH. The protein operates within steroid biosynthesis; zymosterol biosynthesis; zymosterol from lanosterol: step 4/6. Sterol-4-alpha-carboxylate 3-dehydrogenase; part of the third module of ergosterol biosynthesis pathway that includes the late steps of the pathway. ERG26 is a catalytic component of the C-4 demethylation complex that catalyzes the oxidative decarboxylation that results in a reduction of the 3-beta-hydroxy group at the C-3 carbon to an oxo group. The third module or late pathway involves the ergosterol synthesis itself through consecutive reactions that mainly occur in the endoplasmic reticulum (ER) membrane. Firstly, the squalene synthase ERG9 catalyzes the condensation of 2 farnesyl pyrophosphate moieties to form squalene, which is the precursor of all steroids. Squalene synthase is crucial for balancing the incorporation of farnesyl diphosphate (FPP) into sterol and nonsterol isoprene synthesis. Secondly, the squalene epoxidase ERG1 catalyzes the stereospecific oxidation of squalene to (S)-2,3-epoxysqualene, which is considered to be a rate-limiting enzyme in steroid biosynthesis. Then, the lanosterol synthase ERG7 catalyzes the cyclization of (S)-2,3 oxidosqualene to lanosterol, a reaction that forms the sterol core. In the next steps, lanosterol is transformed to zymosterol through a complex process involving various demethylation, reduction and desaturation reactions. The lanosterol 14-alpha-demethylase ERG11 (also known as CYP51) catalyzes C14-demethylation of lanosterol to produce 4,4'-dimethyl cholesta-8,14,24-triene-3-beta-ol, which is critical for ergosterol biosynthesis. The C-14 reductase ERG24 reduces the C14=C15 double bond of 4,4-dimethyl-cholesta-8,14,24-trienol to produce 4,4-dimethyl-cholesta-8,24-dienol. 4,4-dimethyl-cholesta-8,24-dienol is substrate of the C-4 demethylation complex ERG25-ERG26-ERG27 in which ERG25 catalyzes the three-step monooxygenation required for the demethylation of 4,4-dimethyl and 4alpha-methylsterols, ERG26 catalyzes the oxidative decarboxylation that results in a reduction of the 3-beta-hydroxy group at the C-3 carbon to an oxo group, and ERG27 is responsible for the reduction of the keto group on the C-3. ERG28 has a role as a scaffold to help anchor ERG25, ERG26 and ERG27 to the endoplasmic reticulum and ERG29 regulates the activity of the iron-containing C4-methylsterol oxidase ERG25. Then, the sterol 24-C-methyltransferase ERG6 catalyzes the methyl transfer from S-adenosyl-methionine to the C-24 of zymosterol to form fecosterol. The C-8 sterol isomerase ERG2 catalyzes the reaction which results in unsaturation at C-7 in the B ring of sterols and thus converts fecosterol to episterol. The sterol-C5-desaturase ERG3 then catalyzes the introduction of a C-5 double bond in the B ring to produce 5-dehydroepisterol. The C-22 sterol desaturase ERG5 further converts 5-dehydroepisterol into ergosta-5,7,22,24(28)-tetraen-3beta-ol by forming the C-22(23) double bond in the sterol side chain. Finally, ergosta-5,7,22,24(28)-tetraen-3beta-ol is substrate of the C-24(28) sterol reductase ERG4 to produce ergosterol. This is Sterol-4-alpha-carboxylate 3-dehydrogenase ERG26, decarboxylating from Candida albicans (strain SC5314 / ATCC MYA-2876) (Yeast).